The primary structure comprises 355 residues: Peptide chain release factor 1 (355 aa).

At Gln-231 the chain carries N5-methylglutamine. The segment at 283 to 303 (NAQNKEARKTQVGSGDRSERI) is disordered.

The protein belongs to the prokaryotic/mitochondrial release factor family. Post-translationally, methylated by PrmC. Methylation increases the termination efficiency of RF1.

Its subcellular location is the cytoplasm. Its function is as follows. Peptide chain release factor 1 directs the termination of translation in response to the peptide chain termination codons UAG and UAA. The protein is Peptide chain release factor 1 of Helicobacter hepaticus (strain ATCC 51449 / 3B1).